Here is a 557-residue protein sequence, read N- to C-terminus: Probable protein kinase UbiB (557 aa).

One can recognise a Protein kinase domain in the interval 121–509 (SFDTVPLASA…RKLQTRVVTA (389 aa)). Residues 127–135 (LASASIAQV) and Lys-154 each bind ATP. Asp-289 serves as the catalytic Proton acceptor. The next 2 helical transmembrane spans lie at 506–526 (VVTA…YGLH) and 535–555 (VPVW…VAWL).

The protein belongs to the ABC1 family. UbiB subfamily.

Its subcellular location is the cell inner membrane. It participates in cofactor biosynthesis; ubiquinone biosynthesis [regulation]. Functionally, is probably a protein kinase regulator of UbiI activity which is involved in aerobic coenzyme Q (ubiquinone) biosynthesis. The chain is Probable protein kinase UbiB from Xanthomonas oryzae pv. oryzae (strain MAFF 311018).